A 204-amino-acid polypeptide reads, in one-letter code: Glycerol-3-phosphate acyltransferase (204 aa).

5 helical membrane-spanning segments follow: residues 8–28, 53–73, 81–101, 116–136, and 155–175; these read ILIF…CYIF, VPAA…VVIA, FITA…IFFG, FGFS…VAII, and VIFT…IIIL.

It belongs to the PlsY family. Probably interacts with PlsX.

It localises to the cell inner membrane. It carries out the reaction an acyl phosphate + sn-glycerol 3-phosphate = a 1-acyl-sn-glycero-3-phosphate + phosphate. It functions in the pathway lipid metabolism; phospholipid metabolism. In terms of biological role, catalyzes the transfer of an acyl group from acyl-phosphate (acyl-PO(4)) to glycerol-3-phosphate (G3P) to form lysophosphatidic acid (LPA). This enzyme utilizes acyl-phosphate as fatty acyl donor, but not acyl-CoA or acyl-ACP. This Francisella tularensis subsp. mediasiatica (strain FSC147) protein is Glycerol-3-phosphate acyltransferase.